Here is a 177-residue protein sequence, read N- to C-terminus: Nucleoside triphosphate/diphosphate phosphatase (177 aa).

Arg23 acts as the Proton donor in catalysis. Residues Asn87, Asp103, Asp105, Asp107, Asp120, and Glu123 each contribute to the Mg(2+) site.

The protein belongs to the Ntdp family. The cofactor is Mg(2+).

It catalyses the reaction a ribonucleoside 5'-triphosphate + H2O = a ribonucleoside 5'-diphosphate + phosphate + H(+). It carries out the reaction a ribonucleoside 5'-diphosphate + H2O = a ribonucleoside 5'-phosphate + phosphate + H(+). In terms of biological role, has nucleoside phosphatase activity towards nucleoside triphosphates and nucleoside diphosphates. This is Nucleoside triphosphate/diphosphate phosphatase from Streptococcus pyogenes serotype M1.